A 323-amino-acid polypeptide reads, in one-letter code: tRNA dimethylallyltransferase (323 aa).

Position 12 to 19 (12 to 19) interacts with ATP; the sequence is GPTASGKT. Position 14-19 (14-19) interacts with substrate; sequence TASGKT. Interaction with substrate tRNA stretches follow at residues 37-40 and 161-165; these read DSAL and QRLVR.

It belongs to the IPP transferase family. As to quaternary structure, monomer. The cofactor is Mg(2+).

It catalyses the reaction adenosine(37) in tRNA + dimethylallyl diphosphate = N(6)-dimethylallyladenosine(37) in tRNA + diphosphate. In terms of biological role, catalyzes the transfer of a dimethylallyl group onto the adenine at position 37 in tRNAs that read codons beginning with uridine, leading to the formation of N6-(dimethylallyl)adenosine (i(6)A). This chain is tRNA dimethylallyltransferase, found in Azotobacter vinelandii (strain DJ / ATCC BAA-1303).